Consider the following 554-residue polypeptide: Hydroxylamine reductase (554 aa).

Residues Cys3, Cys6, Cys18, and Cys25 each coordinate [2Fe-2S] cluster. Hybrid [4Fe-2O-2S] cluster is bound by residues His252, Glu276, Cys320, Cys408, Cys436, Cys461, Glu495, and Lys497. Residue Cys408 is modified to Cysteine persulfide.

This sequence belongs to the HCP family. Requires [2Fe-2S] cluster as cofactor. It depends on hybrid [4Fe-2O-2S] cluster as a cofactor.

Its subcellular location is the cytoplasm. It carries out the reaction A + NH4(+) + H2O = hydroxylamine + AH2 + H(+). Its function is as follows. Catalyzes the reduction of hydroxylamine to form NH(3) and H(2)O. The protein is Hydroxylamine reductase of Shewanella baltica (strain OS223).